Reading from the N-terminus, the 324-residue chain is MASDVSSHLLTVTQSRWTIHHMYNKLLILALFTPVILESIIYVSGPQGGNVTLVSNFTSNISARWFRWDGNDSHLICFYKRGEGLSTPYVGLSLSCAANQITIFNLTLNDSGRYGAEGFTRSGENETFLWYNLTVKPKPLETTTASNVTTIVTTTPTVIGTKSNVTGNASLAPQLRAVAGFLNQTPRENNTHLALGEGFVPTMTNPGLYASENYNGNYELTEAANTARTNSSDWVTLGTSASLLRSTETAVNPSNATTVTPQPVEYPAGEVQYQRTKTHYSWMLIIAIILIIFIIICLRAPQKVYDRWKDNKQYGQVFMTDTEL.

An immunoglobulin V-like domain region spans residues 36-138; that stretch reads ILESIIYVSG…LWYNLTVKPK (103 aa). The chain crosses the membrane as a helical span at residues 278-298; sequence THYSWMLIIAIILIIFIIICL.

Belongs to the RL11 family. In terms of processing, highly glycosylated.

It is found in the host cell membrane. Functionally, plays a role in the inhibition of pro-inflammatory cytokine production. This effect is mediated by the conserved Ig-like domain. The sequence is that of Membrane protein UL8 (UL8) from Homo sapiens (Human).